We begin with the raw amino-acid sequence, 356 residues long: Heparan sulfate 2-O-sulfotransferase 1 (356 aa).

The Cytoplasmic portion of the chain corresponds to Met1–Lys11. Residues Leu12 to Glu28 form a helical; Signal-anchor for type II membrane protein membrane-spanning segment. Residues Met24–Arg51 are a coiled coil. Over Asn29–Asn356 the chain is Lumenal. Lys83, Thr84, Ala85, Ser86, Thr87, and Ser88 together coordinate adenosine 3',5'-bisphosphate. Residues Asn108 and Asn127 are each glycosylated (N-linked (GlcNAc...) asparagine). Catalysis depends on residues His140 and His142. 2 residues coordinate adenosine 3',5'-bisphosphate: Arg164 and Ser172. 2 disulfide bridges follow: Cys201-Cys209 and Cys222-Cys228. Tyr279, Ser285, Thr290, and Lys293 together coordinate adenosine 3',5'-bisphosphate.

This sequence belongs to the sulfotransferase 3 family. Homotrimer. Interacts with the C5-epimerase GLCE. In terms of processing, N-glycosylated. In terms of tissue distribution, widely expressed. Expressed at higher level in lung and brain. Weakly expressed in spleen.

The protein resides in the golgi apparatus membrane. Its function is as follows. Catalyzes the transfer of a sulfo group from 3'-phospho-5'-adenylyl sulfate (PAPS) to the 2-OH position of iduronic acid (IdoA) or glucuronic acid (GlcA) within the heparan sulfate (HS) chain and participates in HS biosynthesis. Required for metanephric development of kidney formation, suggesting that 2-O-sulfation within HS is essential for signaling between ureteric bud and metanephric mesenchyme. This Mus musculus (Mouse) protein is Heparan sulfate 2-O-sulfotransferase 1.